A 431-amino-acid chain; its full sequence is Enolase (431 aa).

Gln-163 is a binding site for (2R)-2-phosphoglycerate. The active-site Proton donor is the Glu-205. Mg(2+) is bound by residues Asp-242, Glu-288, and Asp-315. Lys-340, Arg-369, Ser-370, and Lys-391 together coordinate (2R)-2-phosphoglycerate. The active-site Proton acceptor is Lys-340.

Belongs to the enolase family. Mg(2+) is required as a cofactor.

Its subcellular location is the cytoplasm. The protein localises to the secreted. It localises to the cell surface. The enzyme catalyses (2R)-2-phosphoglycerate = phosphoenolpyruvate + H2O. It functions in the pathway carbohydrate degradation; glycolysis; pyruvate from D-glyceraldehyde 3-phosphate: step 4/5. Functionally, catalyzes the reversible conversion of 2-phosphoglycerate (2-PG) into phosphoenolpyruvate (PEP). It is essential for the degradation of carbohydrates via glycolysis. This is Enolase from Bacillus anthracis (strain A0248).